Here is a 458-residue protein sequence, read N- to C-terminus: N-acetylgalactosamine kinase (458 aa).

Residues Arg43, Glu49, His50, and Asp52 each contribute to the alpha-D-galactose site. ATP-binding residues include Gly143, Ser145, and Ser146. Asp190 is a binding site for alpha-D-galactose. Residue Asp190 is the Proton acceptor of the active site. ATP is bound by residues Asn233 and Lys234.

It belongs to the GHMP kinase family. GalK subfamily. Monomer.

It catalyses the reaction N-acetyl-alpha-D-galactosamine + ATP = N-acetyl-alpha-D-galactosamine 1-phosphate + ADP + H(+). Functionally, acts on GalNAc. Also acts as a galactokinase when galactose is present at high concentrations. The polypeptide is N-acetylgalactosamine kinase (GALK2) (Pongo abelii (Sumatran orangutan)).